We begin with the raw amino-acid sequence, 269 residues long: Putative ABC transporter ATP-binding protein PF0528 (269 aa).

The 232-residue stretch at 6-237 (IVVENLYSSY…EILKRNNLDV (232 aa)) folds into the ABC transporter domain. 39–46 (GPNGAGKS) is an ATP binding site.

This sequence belongs to the ABC transporter superfamily.

The protein localises to the cell membrane. Functionally, probably part of an ABC transporter complex. Responsible for energy coupling to the transport system. The chain is Putative ABC transporter ATP-binding protein PF0528 from Pyrococcus furiosus (strain ATCC 43587 / DSM 3638 / JCM 8422 / Vc1).